A 111-amino-acid polypeptide reads, in one-letter code: WAP four-disulfide core domain protein 12 (111 aa).

The N-terminal stretch at 1–23 (MRSSRFLVLMVSLALVTLVASEG) is a signal peptide. The region spanning 27–74 (NTEKPGVCPADNVRCIKSDPPQCHTDQDCQGIRKCCYLHCGFKCVIPV) is the WAP domain. Disulfide bonds link C34/C62, C41/C66, C49/C61, and C55/C70.

The protein resides in the secreted. Functionally, antibacterial protein. Putative acid-stable proteinase inhibitor. In Saimiri boliviensis boliviensis (Bolivian squirrel monkey), this protein is WAP four-disulfide core domain protein 12 (WFDC12).